The chain runs to 141 residues: Cytochrome c-type biogenesis protein CcmE (141 aa).

The Cytoplasmic segment spans residues 1–7 (MRARTRR). A helical; Signal-anchor for type II membrane protein membrane pass occupies residues 8 to 28 (LYTFGIAAALIVAAAALAFFA). Residues 29-141 (LRENANLFYT…RELKPLEAGG (113 aa)) lie on the Periplasmic side of the membrane. Heme contacts are provided by His-125 and Tyr-129.

This sequence belongs to the CcmE/CycJ family.

Its subcellular location is the cell inner membrane. In terms of biological role, heme chaperone required for the biogenesis of c-type cytochromes. Transiently binds heme delivered by CcmC and transfers the heme to apo-cytochromes in a process facilitated by CcmF and CcmH. This chain is Cytochrome c-type biogenesis protein CcmE, found in Hyphomonas neptunium (strain ATCC 15444).